Reading from the N-terminus, the 106-residue chain is Nucleoid-associated protein Fjoh_2555 (106 aa).

This sequence belongs to the YbaB/EbfC family. In terms of assembly, homodimer.

It is found in the cytoplasm. The protein resides in the nucleoid. Its function is as follows. Binds to DNA and alters its conformation. May be involved in regulation of gene expression, nucleoid organization and DNA protection. This is Nucleoid-associated protein Fjoh_2555 from Flavobacterium johnsoniae (strain ATCC 17061 / DSM 2064 / JCM 8514 / BCRC 14874 / CCUG 350202 / NBRC 14942 / NCIMB 11054 / UW101) (Cytophaga johnsonae).